The sequence spans 192 residues: MTLRVLGVDPGLTRCGIGVVDVERNRRATMVAVGVVGTSPDESLDQRLLVIATAIDEWLDRYEPQVLAVERVFSQLNVSTVMGVAQASGVVIAAAARRGIPVALHTPSEVKAAVTGSGSSNKDAVTKLVTKILRLDAPPRPADAADALALAITHAWRAGSGASVATTGPGSSSLTPAQRAWAEAEAKARRAR.

Catalysis depends on residues D9, E70, and D143. Mg(2+) is bound by residues D9, E70, and D143. A disordered region spans residues G161–R192. A compositionally biased stretch (polar residues) spans S163–P176. Residues A182–R192 show a composition bias toward basic and acidic residues.

Belongs to the RuvC family. As to quaternary structure, homodimer which binds Holliday junction (HJ) DNA. The HJ becomes 2-fold symmetrical on binding to RuvC with unstacked arms; it has a different conformation from HJ DNA in complex with RuvA. In the full resolvosome a probable DNA-RuvA(4)-RuvB(12)-RuvC(2) complex forms which resolves the HJ. Requires Mg(2+) as cofactor.

It localises to the cytoplasm. The catalysed reaction is Endonucleolytic cleavage at a junction such as a reciprocal single-stranded crossover between two homologous DNA duplexes (Holliday junction).. Its function is as follows. The RuvA-RuvB-RuvC complex processes Holliday junction (HJ) DNA during genetic recombination and DNA repair. Endonuclease that resolves HJ intermediates. Cleaves cruciform DNA by making single-stranded nicks across the HJ at symmetrical positions within the homologous arms, yielding a 5'-phosphate and a 3'-hydroxyl group; requires a central core of homology in the junction. The consensus cleavage sequence is 5'-(A/T)TT(C/G)-3'. Cleavage occurs on the 3'-side of the TT dinucleotide at the point of strand exchange. HJ branch migration catalyzed by RuvA-RuvB allows RuvC to scan DNA until it finds its consensus sequence, where it cleaves and resolves the cruciform DNA. The protein is Crossover junction endodeoxyribonuclease RuvC of Pseudarthrobacter chlorophenolicus (strain ATCC 700700 / DSM 12829 / CIP 107037 / JCM 12360 / KCTC 9906 / NCIMB 13794 / A6) (Arthrobacter chlorophenolicus).